We begin with the raw amino-acid sequence, 364 residues long: tRNA 2-selenouridine synthase (364 aa).

In terms of domain architecture, Rhodanese spans 14 to 136 (VLNNTPLIDV…AFRNWLMQET (123 aa)). Cysteine 97 (S-selanylcysteine intermediate) is an active-site residue.

The protein belongs to the SelU family. As to quaternary structure, monomer.

It carries out the reaction 5-methylaminomethyl-2-thiouridine(34) in tRNA + selenophosphate + (2E)-geranyl diphosphate + H2O + H(+) = 5-methylaminomethyl-2-selenouridine(34) in tRNA + (2E)-thiogeraniol + phosphate + diphosphate. It catalyses the reaction 5-methylaminomethyl-2-thiouridine(34) in tRNA + (2E)-geranyl diphosphate = 5-methylaminomethyl-S-(2E)-geranyl-thiouridine(34) in tRNA + diphosphate. The enzyme catalyses 5-methylaminomethyl-S-(2E)-geranyl-thiouridine(34) in tRNA + selenophosphate + H(+) = 5-methylaminomethyl-2-(Se-phospho)selenouridine(34) in tRNA + (2E)-thiogeraniol. The catalysed reaction is 5-methylaminomethyl-2-(Se-phospho)selenouridine(34) in tRNA + H2O = 5-methylaminomethyl-2-selenouridine(34) in tRNA + phosphate. Involved in the post-transcriptional modification of the uridine at the wobble position (U34) of tRNA(Lys), tRNA(Glu) and tRNA(Gln). Catalyzes the conversion of 2-thiouridine (S2U-RNA) to 2-selenouridine (Se2U-RNA). Acts in a two-step process involving geranylation of 2-thiouridine (S2U) to S-geranyl-2-thiouridine (geS2U) and subsequent selenation of the latter derivative to 2-selenouridine (Se2U) in the tRNA chain. In Sulfurovum sp. (strain NBC37-1), this protein is tRNA 2-selenouridine synthase.